We begin with the raw amino-acid sequence, 81 residues long: MNITKAYVIFFLVVILTNSLSNSDVLASSDIYICVTVIETTKNDVCSTPCTIRYGTFECFHDCILEHYRDGNCINGRCCCK.

The first 23 residues, 1–23, serve as a signal peptide directing secretion; sequence MNITKAYVIFFLVVILTNSLSNS. 4 disulfides stabilise this stretch: cysteine 46-cysteine 80, cysteine 50-cysteine 73, cysteine 59-cysteine 78, and cysteine 63-cysteine 79.

The protein belongs to the DEFL family.

It is found in the secreted. In Arabidopsis thaliana (Mouse-ear cress), this protein is Putative defensin-like protein 56.